The chain runs to 209 residues: Large ribosomal subunit protein uL3 (209 aa).

A disordered region spans residues 118–150 (GFQGAIKRHGQSRGPMTHGSRYHRRPGSMGPVD).

The protein belongs to the universal ribosomal protein uL3 family. In terms of assembly, part of the 50S ribosomal subunit. Forms a cluster with proteins L14 and L19.

In terms of biological role, one of the primary rRNA binding proteins, it binds directly near the 3'-end of the 23S rRNA, where it nucleates assembly of the 50S subunit. The protein is Large ribosomal subunit protein uL3 of Bacillus pumilus (strain SAFR-032).